We begin with the raw amino-acid sequence, 217 residues long: Deoxyribose-phosphate aldolase (217 aa).

D89 (proton donor/acceptor) is an active-site residue. K151 (schiff-base intermediate with acetaldehyde) is an active-site residue. K180 functions as the Proton donor/acceptor in the catalytic mechanism.

It belongs to the DeoC/FbaB aldolase family. DeoC type 1 subfamily.

It is found in the cytoplasm. It catalyses the reaction 2-deoxy-D-ribose 5-phosphate = D-glyceraldehyde 3-phosphate + acetaldehyde. It functions in the pathway carbohydrate degradation; 2-deoxy-D-ribose 1-phosphate degradation; D-glyceraldehyde 3-phosphate and acetaldehyde from 2-deoxy-alpha-D-ribose 1-phosphate: step 2/2. Its function is as follows. Catalyzes a reversible aldol reaction between acetaldehyde and D-glyceraldehyde 3-phosphate to generate 2-deoxy-D-ribose 5-phosphate. The polypeptide is Deoxyribose-phosphate aldolase (Mycoplasma mobile (strain ATCC 43663 / 163K / NCTC 11711) (Mesomycoplasma mobile)).